The primary structure comprises 364 residues: Probable dual-specificity RNA methyltransferase RlmN (364 aa).

The active-site Proton acceptor is glutamate 107. Residues 113–346 (HEYGNSVCVT…ATIRREQGSD (234 aa)) form the Radical SAM core domain. Residues cysteine 120 and cysteine 351 are joined by a disulfide bond. Positions 127, 131, and 134 each coordinate [4Fe-4S] cluster. S-adenosyl-L-methionine contacts are provided by residues 177–178 (GE), serine 209, 232–234 (SLH), and asparagine 308. The active-site S-methylcysteine intermediate is the cysteine 351.

Belongs to the radical SAM superfamily. RlmN family. It depends on [4Fe-4S] cluster as a cofactor.

The protein resides in the cytoplasm. It catalyses the reaction adenosine(2503) in 23S rRNA + 2 reduced [2Fe-2S]-[ferredoxin] + 2 S-adenosyl-L-methionine = 2-methyladenosine(2503) in 23S rRNA + 5'-deoxyadenosine + L-methionine + 2 oxidized [2Fe-2S]-[ferredoxin] + S-adenosyl-L-homocysteine. The catalysed reaction is adenosine(37) in tRNA + 2 reduced [2Fe-2S]-[ferredoxin] + 2 S-adenosyl-L-methionine = 2-methyladenosine(37) in tRNA + 5'-deoxyadenosine + L-methionine + 2 oxidized [2Fe-2S]-[ferredoxin] + S-adenosyl-L-homocysteine. Specifically methylates position 2 of adenine 2503 in 23S rRNA and position 2 of adenine 37 in tRNAs. Confers resistance to some classes of antibiotics. The polypeptide is Probable dual-specificity RNA methyltransferase RlmN (Staphylococcus carnosus (strain TM300)).